We begin with the raw amino-acid sequence, 151 residues long: MKYCKPKSKSILSLDVGLKRIGLAYCDSLFITVNILPALKRERNNNEIIIIKEHIKKHNLTGFIVGLPLDEAGGMTSQALDCKTYGEFLFNELKLPFSFVNEHSSTWESTNRFGVKKDKSGLIDSLSAKIILEQWIQEGPELKELVGNKQI.

It belongs to the YqgF nuclease family.

The protein localises to the cytoplasm. Functionally, could be a nuclease involved in processing of the 5'-end of pre-16S rRNA. This Prochlorococcus marinus subsp. pastoris (strain CCMP1986 / NIES-2087 / MED4) protein is Putative pre-16S rRNA nuclease.